The sequence spans 132 residues: Large ribosomal subunit protein uL14 (132 aa).

Belongs to the universal ribosomal protein uL14 family. In terms of assembly, part of the 50S ribosomal subunit. Forms a cluster with proteins L3 and L24e, part of which may contact the 16S rRNA in 2 intersubunit bridges.

Functionally, binds to 23S rRNA. Forms part of two intersubunit bridges in the 70S ribosome. The protein is Large ribosomal subunit protein uL14 of Methanosarcina mazei (strain ATCC BAA-159 / DSM 3647 / Goe1 / Go1 / JCM 11833 / OCM 88) (Methanosarcina frisia).